Here is a 169-residue protein sequence, read N- to C-terminus: Shikimate kinase (169 aa).

12-17 (GAGKST) serves as a coordination point for ATP. Mg(2+) is bound at residue Ser-16. 3 residues coordinate substrate: Asp-34, Arg-58, and Gly-80. Residue Arg-117 participates in ATP binding. Position 136 (Arg-136) interacts with substrate.

This sequence belongs to the shikimate kinase family. Monomer. Mg(2+) serves as cofactor.

The protein resides in the cytoplasm. It carries out the reaction shikimate + ATP = 3-phosphoshikimate + ADP + H(+). The protein operates within metabolic intermediate biosynthesis; chorismate biosynthesis; chorismate from D-erythrose 4-phosphate and phosphoenolpyruvate: step 5/7. Its function is as follows. Catalyzes the specific phosphorylation of the 3-hydroxyl group of shikimic acid using ATP as a cosubstrate. The chain is Shikimate kinase from Rhodococcus erythropolis (strain PR4 / NBRC 100887).